Reading from the N-terminus, the 410-residue chain is Translation initiation factor 2 subunit gamma (410 aa).

Residues 6–203 (QSEINIGMVG…AIEDLMPTPE (198 aa)) enclose the tr-type G domain. A G1 region spans residues 15–22 (GHVDHGKT). Asp-18, Thr-22, Gly-43, and Ser-45 together coordinate Mg(2+). 18–23 (DHGKTS) is a binding site for GTP. Residues 43–47 (GISIR) are G2. Zn(2+) is bound by residues Cys-58, Cys-61, Cys-73, and Cys-76. The G3 stretch occupies residues 90-93 (DAPG). GTP-binding positions include 146-149 (NKID) and 181-183 (SAH). Positions 146–149 (NKID) are G4. Positions 181-183 (SAH) are G5.

Belongs to the TRAFAC class translation factor GTPase superfamily. Classic translation factor GTPase family. EIF2G subfamily. Heterotrimer composed of an alpha, a beta and a gamma chain. Mg(2+) is required as a cofactor.

It carries out the reaction GTP + H2O = GDP + phosphate + H(+). In terms of biological role, eIF-2 functions in the early steps of protein synthesis by forming a ternary complex with GTP and initiator tRNA. The chain is Translation initiation factor 2 subunit gamma from Methanococcus aeolicus (strain ATCC BAA-1280 / DSM 17508 / OCM 812 / Nankai-3).